Reading from the N-terminus, the 294-residue chain is Acetylglutamate kinase (294 aa).

Residues 67 to 68 (GG), Arg-89, and Asn-193 each bind substrate.

This sequence belongs to the acetylglutamate kinase family. ArgB subfamily.

Its subcellular location is the cytoplasm. The enzyme catalyses N-acetyl-L-glutamate + ATP = N-acetyl-L-glutamyl 5-phosphate + ADP. It functions in the pathway amino-acid biosynthesis; L-arginine biosynthesis; N(2)-acetyl-L-ornithine from L-glutamate: step 2/4. Catalyzes the ATP-dependent phosphorylation of N-acetyl-L-glutamate. The polypeptide is Acetylglutamate kinase (Leptospira interrogans serogroup Icterohaemorrhagiae serovar copenhageni (strain Fiocruz L1-130)).